The primary structure comprises 803 residues: E3 ubiquitin-protein ligase UHRF2 (803 aa).

Residues 1-78 form the Ubiquitin-like domain; sequence MWIQVRTIDG…IQLLVRPDSS (78 aa). Polar residues-rich tracts occupy residues 79 to 96, 106 to 115, 167 to 181, and 189 to 200; these read LPST…SSHN, GGSSSQPSTS, KNGS…NVNH, and KLDNVPSTSNSD. Disordered stretches follow at residues 79–115 and 154–200; these read LPST…PSTS and RASD…SNSD. Residues 118 to 312 are required for interaction with histone H3; it reads TCLIDPGFGL…VDEIFKIEKP (195 aa). Residues 195–289 are interaction with PCNP; the sequence is STSNSDSVAA…KEVRVKVFLG (95 aa). The PHD-type zinc finger occupies 340–396; that stretch reads DKTCHMCSCHKCGEKRDPNMQLLCDECNMAYHIYCLSPPLDKVPEEEYWYCPSCKTD. The segment at 415-645 is methyl-CpG binding and interaction with HDAC1; sequence KMPSASTESR…LQYPAGYPSE (231 aa). The region spanning 449-613 is the YDG domain; it reads GPIPGIPVGS…FLVWRYLLRR (165 aa). The tract at residues 643 to 676 is disordered; sequence PSEKEGKKTKGQSKKQGSEATKRPASDDECPGDS. Residues 658–668 are compositionally biased toward basic and acidic residues; sequence QGSEATKRPAS. S668 is modified (phosphoserine). The RING-type zinc finger occupies 734 to 773; sequence CVCCQELVYQPVTTECFHNVCKDCLQRSFKAQVFSCPACR.

Homodimer; disulfide-linked. Binds methylated CpG containing oligonucleotides. Interacts with H3; the interaction has a preference for the 'Lys-9' trimethylated form of H3 (H3K9me3). Interacts with PCNP. Interacts with HDAC1. Interacts directly with CCNE1; the interaction ubiquitinates CCNE1 and appears independent of CCNE1 phosphorylation. Interacts with CCND1; the interaction ubiquitinates CCND1 and appears independent of CCND1 phosphorylation. Interacts with p53/TP53 and RB1. Interacts with UBE2I. Interacts with ZNF618. Interacts with UHRF1. Interacts with FANCD2. Interacts with ATR. Interacts with PCNA. Post-translationally, may be autoubiquitinated; which may lead to proteasomal degradation. Phosphorylated. Phosphorylation may be mediated by CDK2. In terms of processing, autosumoylated. In terms of tissue distribution, mostly detected in several tissues, including the thymus, spleen, lung, adrenal gland, and ovary. In addition, found in several tissues in the brain (cerebellum, hippocampus, and cerebral cortex).

The protein localises to the nucleus. It localises to the chromosome. It catalyses the reaction S-ubiquitinyl-[E2 ubiquitin-conjugating enzyme]-L-cysteine + [acceptor protein]-L-lysine = [E2 ubiquitin-conjugating enzyme]-L-cysteine + N(6)-ubiquitinyl-[acceptor protein]-L-lysine.. The protein operates within protein modification; protein ubiquitination. Its activity is regulated as follows. E3 ligase activity is robustly activated by 5-hydroxy-methylcytosine. E3 ubiquitin ligase that plays important roles in DNA methylation, histone modifications, cell cycle and DNA repair. Acts as a specific reader for 5-hydroxymethylcytosine (5hmC) and thereby recruits various substrates to these sites to ubiquitinate them. This activity also allows the maintenance of 5mC levels at specific genomic loci and regulates neuron-related gene expression. Participates in cell cycle regulation by ubiquitinating cyclins CCND1 and CCNE1 and thus inducing G1 arrest. Also ubiquitinates PCNP leading to its degradation by the proteasome. Plays an active role in DNA damage repair by ubiquitinating p21/CDKN1A leading to its proteasomal degradation. Also promotes DNA repair by acting as an interstrand cross-links (ICLs) sensor. Mechanistically, cooperates with UHRF1 to ensure recruitment of FANCD2 to ICLs, leading to FANCD2 monoubiquitination and subsequent activation. Contributes to UV-induced DNA damage response by physically interacting with ATR in response to irradiation, thereby promoting ATR activation. The chain is E3 ubiquitin-protein ligase UHRF2 (Uhrf2) from Mus musculus (Mouse).